The chain runs to 147 residues: Phosphoribosyl-AMP cyclohydrolase (147 aa).

Aspartate 91 is a binding site for Mg(2+). Residue cysteine 92 coordinates Zn(2+). Mg(2+) is bound by residues aspartate 93 and aspartate 95. Residues cysteine 109 and cysteine 116 each contribute to the Zn(2+) site.

This sequence belongs to the PRA-CH family. In terms of assembly, homodimer. Mg(2+) is required as a cofactor. Zn(2+) serves as cofactor.

Its subcellular location is the cytoplasm. It catalyses the reaction 1-(5-phospho-beta-D-ribosyl)-5'-AMP + H2O = 1-(5-phospho-beta-D-ribosyl)-5-[(5-phospho-beta-D-ribosylamino)methylideneamino]imidazole-4-carboxamide. It participates in amino-acid biosynthesis; L-histidine biosynthesis; L-histidine from 5-phospho-alpha-D-ribose 1-diphosphate: step 3/9. In terms of biological role, catalyzes the hydrolysis of the adenine ring of phosphoribosyl-AMP. In Rhodopseudomonas palustris (strain BisA53), this protein is Phosphoribosyl-AMP cyclohydrolase.